We begin with the raw amino-acid sequence, 522 residues long: Tryptophan 2-halogenase (522 aa).

The FAD site is built by Ala17, Glu36, Arg42, His44, Ile45, Ser48, Arg103, Ile127, and Asp296. Chloride contacts are provided by Ser307 and Gly308. Val309 provides a ligand contact to FAD.

The protein belongs to the flavin-dependent halogenase family.

Involved in the incorporation of a chlorinated tryptophan residue into halogenated forms of the secondary metabolites called chondramides. This Chondromyces crocatus protein is Tryptophan 2-halogenase.